The sequence spans 605 residues: Pescadillo homolog (605 aa).

The tract at residues 51–484 (KANKGSTAPT…GEEEESESES (434 aa)) is sufficient for interaction with ERB1. Residue S288 is modified to Phosphoserine. Positions 294 to 342 (LKSALNADEANTDETEKEEEQEKKQEKEQEKEQNEETELDTFEDNNKNK) form a coiled coil. Residues 297 to 342 (ALNADEANTDETEKEEEQEKKQEKEQEKEQNEETELDTFEDNNKNK) are disordered. Residues 303-312 (ANTDETEKEE) are compositionally biased toward acidic residues. T308 is modified (phosphothreonine). Positions 313-327 (EQEKKQEKEQEKEQN) are enriched in basic and acidic residues. In terms of domain architecture, BRCT spans 355-449 (PVASLFSAFV…ELVPANKYLP (95 aa)). Positions 459-605 (PWGDAIGYDP…AKLNKLDSKK (147 aa)) are disordered. Positions 473–510 (EEGEEEESESESESEDQVEEEDQEVVAGEEDDDDDEEL) are enriched in acidic residues. Residues 530 to 605 (EADKDVNKSK…AKLNKLDSKK (76 aa)) are a coiled coil. The span at 562–571 (KQKKLYKKMK) shows a compositional bias: basic residues. The segment covering 575 to 584 (AKKEEQAENL) has biased composition (basic and acidic residues). A compositionally biased stretch (basic residues) spans 585 to 598 (KKKKKQIAKQKAKL).

Belongs to the pescadillo family. Component of the NOP7 complex, composed of ERB1, NOP7 and YTM1. The complex is held together by ERB1, which interacts with NOP7 via its N-terminal domain and with YTM1 via a high-affinity interaction between the seven-bladed beta-propeller domains of the 2 proteins. The NOP7 complex associates with the 66S pre-ribosome.

The protein localises to the nucleus. The protein resides in the nucleolus. It is found in the nucleoplasm. Component of the NOP7 complex, which is required for maturation of the 25S and 5.8S ribosomal RNAs and formation of the 60S ribosome. The protein is Pescadillo homolog of Saccharomyces cerevisiae (strain YJM789) (Baker's yeast).